Reading from the N-terminus, the 399-residue chain is MKPNRPLIVILSTVALDAVGIGLIMPVLPGLLRDLVHSNDVTAHYGILLALYALMQFACAPVLGALSDRFGRRPVLLVSLAGAAVDYAIMATAPFLWVLYIGRIVAGITGATGAVAGAYIADITDGDERARHFGFMSACFGFGMVAGPVLGGLMGGFSPHAPFFAAAALNGLNFLTGCFLLPESHKGERRPLRREALNPLASFRWARGMTVVAALMAVFFIMQLVGQVPAALWVIFGEDRFHWDATTIGISLAAFGILHSLAQAMITGPVAARLGERRALMLGMIADGTGYILLAFATRGWMAFPIMVLLASGGIGMPALQAMLSRQVDEERQGQLQGSLAALTSLTSIVGPLLFTAIYAASITTWNGWAWIAGAALYLLCLPALRRGLWSGAGQRADR.

Transmembrane regions (helical) follow at residues 7–29 (LIVI…PVLP), 44–66 (HYGI…LGAL), 73–95 (RPVL…TAPF), 99–121 (LYIG…AYIA), 133–155 (FGFM…GLMG), 160–182 (HAPF…FLLP), 203–225 (FRWA…MQLV), 245–267 (ATTI…AMIT), 279–298 (ALML…AFAT), 302–324 (MAFP…QAML), 336–358 (LQGS…FTAI), and 368–390 (GWAW…RGLW).

Belongs to the major facilitator superfamily. TCR/Tet family.

The protein localises to the cell inner membrane. In terms of biological role, resistance to tetracycline by an active tetracycline efflux. This is an energy-dependent process that decreases the accumulation of the antibiotic in whole cells. This protein functions as a metal-tetracycline/H(+) antiporter. The polypeptide is Tetracycline resistance protein, class A (tetA) (Escherichia coli).